The following is a 222-amino-acid chain: UPF0502 protein Lcho_2066 (222 aa).

Belongs to the UPF0502 family.

This is UPF0502 protein Lcho_2066 from Leptothrix cholodnii (strain ATCC 51168 / LMG 8142 / SP-6) (Leptothrix discophora (strain SP-6)).